A 79-amino-acid chain; its full sequence is Short neurotoxin 2 (79 aa).

An N-terminal signal peptide occupies residues 1–21 (MKTLLLTLVMVTIMCLDLGYT). 4 disulfide bridges follow: Cys-24-Cys-41, Cys-34-Cys-59, Cys-63-Cys-71, and Cys-72-Cys-77.

It belongs to the three-finger toxin family. Short-chain subfamily. Type III alpha-neurotoxin sub-subfamily. In terms of tissue distribution, expressed by the venom gland.

The protein resides in the secreted. Binds with high affinity to muscle nicotinic acetylcholine receptor (nAChR) and hinders acetylcholine binding to the receptor, thereby impairing neuromuscular transmission. Competes with the binding of alpha-bungarotoxin on muscle AChR (from Torpedo) with an IC(50) of 0.30 uM. Causes muscle paralysis, spasms and increased respiration. This chain is Short neurotoxin 2, found in Pseudonaja textilis (Eastern brown snake).